The sequence spans 1529 residues: Ras guanine nucleotide exchange factor B (1529 aa).

A coiled-coil region spans residues 135-186 (ISNIEKQLSNLVNLKSNTTEQTDRKYKTNLIDFKESIIQLEKDCKNLLKQSN). Disordered regions lie at residues 290–357 (INTL…ISIN), 576–600 (TTTT…KSSH), 680–724 (KRNT…HIQQ), 847–948 (MGKE…NHNR), and 1168–1206 (QPPQ…STNL). 3 stretches are compositionally biased toward low complexity: residues 576 to 591 (TTTT…TTTN), 683 to 724 (TSSG…HIQQ), and 853 to 887 (NSNT…NNNE). Coiled-coil stretches lie at residues 722 to 798 (IQQI…LNRK) and 871 to 898 (NNNN…ETNK). Over residues 888-898 (NKNENKNETNK) the composition is skewed to basic and acidic residues. Low complexity-rich tracts occupy residues 906 to 916 (SSTSTLSSSTT), 924 to 940 (SSTN…LLPP), 1168 to 1187 (QPPQ…TTQP), and 1197 to 1206 (QPQLQQSTNL). The N-terminal Ras-GEF domain maps to 1075 to 1205 (FYRSIKYASL…PQPQLQQSTN (131 aa)). The 236-residue stretch at 1282 to 1517 (SSTDIAEQLT…YEQSILLEPK (236 aa)) folds into the Ras-GEF domain.

It is found in the cytoplasm. Promotes the exchange of Ras-bound GDP by GTP. Involved in phagocytosis, fluid-phase endocytosis, regulation of macropinocytosis and control of cell movement. This Dictyostelium discoideum (Social amoeba) protein is Ras guanine nucleotide exchange factor B (gefB).